Here is a 248-residue protein sequence, read N- to C-terminus: 5'-nucleotidase SurE (248 aa).

Residues aspartate 8, aspartate 9, serine 39, and asparagine 91 each contribute to the a divalent metal cation site.

It belongs to the SurE nucleotidase family. A divalent metal cation is required as a cofactor.

The protein resides in the cytoplasm. The enzyme catalyses a ribonucleoside 5'-phosphate + H2O = a ribonucleoside + phosphate. In terms of biological role, nucleotidase that shows phosphatase activity on nucleoside 5'-monophosphates. The chain is 5'-nucleotidase SurE from Geobacter sp. (strain M21).